Consider the following 172-residue polypeptide: Large ribosomal subunit protein uL10 (172 aa).

It belongs to the universal ribosomal protein uL10 family. As to quaternary structure, part of the ribosomal stalk of the 50S ribosomal subunit. The N-terminus interacts with L11 and the large rRNA to form the base of the stalk. The C-terminus forms an elongated spine to which L12 dimers bind in a sequential fashion forming a multimeric L10(L12)X complex.

Forms part of the ribosomal stalk, playing a central role in the interaction of the ribosome with GTP-bound translation factors. This chain is Large ribosomal subunit protein uL10, found in Francisella philomiragia subsp. philomiragia (strain ATCC 25017 / CCUG 19701 / FSC 153 / O#319-036).